The primary structure comprises 207 residues: High frequency lysogenization protein HflD homolog (207 aa).

The protein belongs to the HflD family.

It is found in the cytoplasm. The protein localises to the cell inner membrane. The protein is High frequency lysogenization protein HflD homolog of Teredinibacter turnerae (strain ATCC 39867 / T7901).